A 158-amino-acid chain; its full sequence is Ribosome maturation factor RimP (158 aa).

The protein belongs to the RimP family.

The protein resides in the cytoplasm. In terms of biological role, required for maturation of 30S ribosomal subunits. The chain is Ribosome maturation factor RimP from Lactobacillus gasseri (strain ATCC 33323 / DSM 20243 / BCRC 14619 / CIP 102991 / JCM 1131 / KCTC 3163 / NCIMB 11718 / NCTC 13722 / AM63).